Here is a 147-residue protein sequence, read N- to C-terminus: Austinoid biosynthesis clusters protein H (147 aa).

Belongs to the trt14 isomerase family. Homodimer.

It functions in the pathway secondary metabolite biosynthesis; terpenoid biosynthesis. Part of the gene cluster B that mediates the biosynthesis of the fungal meroterpenoid acetoxydehydroaustin. The first step of the pathway is the synthesis of 3,5-dimethylorsellinic acid by the polyketide synthase ausA. 3,5-dimethylorsellinic acid is then prenylated by the polyprenyl transferase ausN. Further epoxidation by the FAD-dependent monooxygenase ausM and cyclization by the probable terpene cyclase ausL lead to the formation of protoaustinoid A. Protoaustinoid A is then oxidized to spiro-lactone preaustinoid A3 by the combined action of the FAD-binding monooxygenases ausB and ausC, and the dioxygenase ausE. Acid-catalyzed keto-rearrangement and ring contraction of the tetraketide portion of preaustinoid A3 by ausJ lead to the formation of preaustinoid A4. The aldo-keto reductase ausK, with the help of ausH, is involved in the next step by transforming preaustinoid A4 into isoaustinone which is in turn hydroxylated by the P450 monooxygenase ausI to form austinolide. The cytochrome P450 monooxygenase ausG then modifies austinolide to austinol. Austinol is further acetylated to austin by the O-acetyltransferase ausP, which spontaneously changes to dehydroaustin. The cytochrome P450 monooxygenase then converts dehydroaustin is into 7-dehydrodehydroaustin. The hydroxylation catalyzed by ausR permits the second O-acetyltransferase ausQ to add an additional acetyl group to the molecule, leading to the formation of acetoxydehydroaustin. Due to genetic rearrangements of the clusters and the subsequent loss of some enzymes, the end product of the Penicillium brasilianum austinoid biosynthesis clusters is acetoxydehydroaustin. The sequence is that of Austinoid biosynthesis clusters protein H from Penicillium brasilianum.